A 127-amino-acid polypeptide reads, in one-letter code: Putative pre-16S rRNA nuclease (127 aa).

It belongs to the YqgF nuclease family.

The protein resides in the cytoplasm. Could be a nuclease involved in processing of the 5'-end of pre-16S rRNA. This Campylobacter jejuni subsp. jejuni serotype O:6 (strain 81116 / NCTC 11828) protein is Putative pre-16S rRNA nuclease.